The chain runs to 190 residues: MSEQEKDQNNAEPQVETVEEQQAAAAAEAVEPTAEEKLAEVEVELAKVKKALAEADVRAQAEVQNVRKRAERDVQHARKFALEKFAGDLLSVADNLERGLAALDAEDDALKGAREGIELTLKSLLDAFARYNIEQINPADEPFNPELHEAMTMVPVPNVDPNSVIEVLEKGYQLNGRLIRPARVVVSKAP.

Residues 1 to 33 are disordered; it reads MSEQEKDQNNAEPQVETVEEQQAAAAAEAVEPT. Low complexity predominate over residues 11–32; it reads AEPQVETVEEQQAAAAAEAVEP.

This sequence belongs to the GrpE family. As to quaternary structure, homodimer.

The protein localises to the cytoplasm. Participates actively in the response to hyperosmotic and heat shock by preventing the aggregation of stress-denatured proteins, in association with DnaK and GrpE. It is the nucleotide exchange factor for DnaK and may function as a thermosensor. Unfolded proteins bind initially to DnaJ; upon interaction with the DnaJ-bound protein, DnaK hydrolyzes its bound ATP, resulting in the formation of a stable complex. GrpE releases ADP from DnaK; ATP binding to DnaK triggers the release of the substrate protein, thus completing the reaction cycle. Several rounds of ATP-dependent interactions between DnaJ, DnaK and GrpE are required for fully efficient folding. The polypeptide is Protein GrpE (Alcanivorax borkumensis (strain ATCC 700651 / DSM 11573 / NCIMB 13689 / SK2)).